Reading from the N-terminus, the 216-residue chain is Somatotropin (216 aa).

The signal sequence occupies residues 1–26; that stretch reads MAADSQTSRLLTFTLLCLLWPQEAGA. Residue H45 participates in Zn(2+) binding. Cysteines 78 and 189 form a disulfide. Phosphoserine is present on S131. E198 lines the Zn(2+) pocket. A disulfide bond links C206 and C214.

This sequence belongs to the somatotropin/prolactin family.

The protein resides in the secreted. In terms of biological role, plays an important role in growth control. Its major role in stimulating body growth is to stimulate the liver and other tissues to secrete IGF1. It stimulates both the differentiation and proliferation of myoblasts. It also stimulates amino acid uptake and protein synthesis in muscle and other tissues. This Mesocricetus auratus (Golden hamster) protein is Somatotropin (GH1).